Reading from the N-terminus, the 551-residue chain is Probable NADH-ubiquinone oxidoreductase C3A11.07, mitochondrial (551 aa).

The transit peptide at 1 to 37 (MLFSRSILRGMPKAGIPKSPLALSASRNLRLANSVRF) directs the protein to the mitochondrion. 93-123 (TLVVLGAGWGATSILRTIDTSLFNVIVVSPR) is a binding site for FAD. 255-291 (VHTVVVGGGPTGMEFAGEMADFIEDDLKSWYPELADD) serves as a coordination point for NAD(+).

The protein belongs to the NADH dehydrogenase family.

The protein resides in the mitochondrion. The enzyme catalyses a quinone + NADH + H(+) = a quinol + NAD(+). It catalyses the reaction a ubiquinone + NADH + H(+) = a ubiquinol + NAD(+). In terms of biological role, catalyzes the oxidation of NADH. This is Probable NADH-ubiquinone oxidoreductase C3A11.07, mitochondrial from Schizosaccharomyces pombe (strain 972 / ATCC 24843) (Fission yeast).